The sequence spans 592 residues: Prospero homeobox protein 2 (592 aa).

Disordered regions lie at residues 20 to 56, 85 to 129, 155 to 218, 308 to 336, and 353 to 382; these read EACT…PEWF, GNAQ…RKGG, KPRD…LPSG, RLDS…PLTA, and RYNN…LRPW. A compositionally biased stretch (basic residues) spans 95–106; the sequence is CPKKARERKRKQ. The segment covering 201–211 has biased composition (basic and acidic residues); the sequence is SGAEKHQESEK. Residues 314–331 are compositionally biased toward pro residues; the sequence is YPIPPRMTPKPCQDPPAN. Low complexity predominate over residues 360-377; it reads SSSPPQDSSSQRHPSSEP. Residues 437–495 form the Prospero-type homeo domain; sequence QEGLNPGHLKKAKLMFFFTRYPSSNLLKVYFPDVQFNRCITSQMIKWFSNFREFYYIQM. The tract at residues 437–592 is homeo-Prospero; it reads QEGLNPGHLK…EIFKSSSYPQ (156 aa). A Prospero domain is found at 496–592; sequence EKSARQAISD…EIFKSSSYPQ (97 aa).

This sequence belongs to the Prospero homeodomain family.

The protein resides in the nucleus. Its function is as follows. Transcription regulator. Does not seem to be essential for embryonic development and postnatal survival. This Homo sapiens (Human) protein is Prospero homeobox protein 2 (PROX2).